A 38-amino-acid chain; its full sequence is Non-specific lipid-transfer protein P2 (38 aa).

It belongs to the plant LTP family.

Its subcellular location is the secreted. Functionally, plant non-specific lipid-transfer proteins transfer phospholipids as well as galactolipids across membranes. May play a role in wax or cutin deposition in the cell walls of expanding epidermal cells and certain secretory tissues. This chain is Non-specific lipid-transfer protein P2, found in Vitis sp. (Grape).